A 276-amino-acid chain; its full sequence is Octanoyltransferase LipM (276 aa).

Positions 32–247 (GALPPVIRFY…GFEKGLDIKL (216 aa)) constitute a BPL/LPL catalytic domain. The active-site Acyl-thioester intermediate is Cys149.

This sequence belongs to the octanoyltransferase LipM family. Monomer.

It carries out the reaction octanoyl-[ACP] + L-lysyl-[protein] = N(6)-octanoyl-L-lysyl-[protein] + holo-[ACP] + H(+). The protein operates within protein modification; protein lipoylation via endogenous pathway; protein N(6)-(lipoyl)lysine from octanoyl-[acyl-carrier-protein]. Catalyzes the transfer of endogenously produced octanoic acid from octanoyl-acyl-carrier-protein onto the lipoyl domain of GcvH, an intermediate carrier during protein lipoylation. The chain is Octanoyltransferase LipM from Macrococcus caseolyticus (strain JCSC5402) (Macrococcoides caseolyticum).